The following is a 284-amino-acid chain: MSRPDQAARRRAIAAELHVSPTFDARDEAERRIGFVADYLRTAGLRACVLGISGGIDSSTAGRLAQLAVERLRASGYDARFVAMRLPYGAQHDEADARRALAFVRADETLTVDVKPAADAMLAALAAGGLAYLDHAQQDFVLGNIKARERMIAQYAVAGARNGVVIGTDHAAESVMGFFTKFGDGGADVLPLAGLTKRRVRALARMLGADEPLVLKTPTADLETLRPQRPDEHAYGITYEQIDDFLEGKPMDDAVAETVLRFYDATHHKRALPYTMFDWPGHPA.

Position 51–58 (51–58 (GISGGIDS)) interacts with ATP. Asp57 lines the Mg(2+) pocket. Arg148 is a deamido-NAD(+) binding site. Residue Thr168 participates in ATP binding. Glu173 is a binding site for Mg(2+). Lys181 and Asp188 together coordinate deamido-NAD(+). Residues Lys197 and Thr219 each contribute to the ATP site. 268–269 (HK) is a binding site for deamido-NAD(+).

It belongs to the NAD synthetase family. As to quaternary structure, homodimer.

The enzyme catalyses deamido-NAD(+) + NH4(+) + ATP = AMP + diphosphate + NAD(+) + H(+). It functions in the pathway cofactor biosynthesis; NAD(+) biosynthesis; NAD(+) from deamido-NAD(+) (ammonia route): step 1/1. Catalyzes the ATP-dependent amidation of deamido-NAD to form NAD. Uses ammonia as a nitrogen source. The polypeptide is NH(3)-dependent NAD(+) synthetase (Burkholderia mallei (strain NCTC 10247)).